The chain runs to 309 residues: Probable pathogenesis-related protein ARB_02861 (309 aa).

An N-terminal signal peptide occupies residues 1 to 17; it reads MKSSVLMTALCVAGSLA. Residues 47–59 are compositionally biased toward low complexity; the sequence is CPTVIPTTSYKPE. The tract at residues 47–152 is disordered; that stretch reads CPTVIPTTSY…PPPPGKDYKE (106 aa). Pro residues-rich tracts occupy residues 61–92 and 99–147; these read TSKP…PCPE and APPP…PPPG. The SCP domain maps to 154–284; sequence AGYHHNVHRS…GDAYYTVCNY (131 aa). N164 carries an N-linked (GlcNAc...) asparagine glycan.

Belongs to the CRISP family.

It localises to the secreted. Functionally, secreted protein required for efficient export of lipids such as acetylated sterols. Acts in detoxification of hydrophobic compounds. The protein is Probable pathogenesis-related protein ARB_02861 of Arthroderma benhamiae (strain ATCC MYA-4681 / CBS 112371) (Trichophyton mentagrophytes).